The chain runs to 393 residues: RNA polymerase II holoenzyme cyclin-like subunit (393 aa).

Positions 51–146 constitute a Cyclin N-terminal domain; it reads ICKRLNLRQR…LLEEMEFDMV (96 aa).

The protein belongs to the cyclin family. Cyclin C subfamily. Component of the SRB8-11 complex, a regulatory module of the Mediator complex.

It is found in the nucleus. Component of the SRB8-11 complex. The SRB8-11 complex is a regulatory module of the Mediator complex which is itself involved in regulation of basal and activated RNA polymerase II-dependent transcription. The SRB8-11 complex may be involved in the transcriptional repression of a subset of genes regulated by Mediator. It may inhibit the association of the Mediator complex with RNA polymerase II to form the holoenzyme complex. The SRB8-11 complex phosphorylates the C-terminal domain (CTD) of the largest subunit of RNA polymerase II. In Mycosarcoma maydis (Corn smut fungus), this protein is RNA polymerase II holoenzyme cyclin-like subunit (SSN8).